The following is a 272-amino-acid chain: sn-1 stearoyl-lipid 9-desaturase (272 aa).

The next 2 helical transmembrane spans lie at 11–31 (INWV…FAFI) and 39–59 (AVGV…TLGF). The short motif at 60 to 65 (HRLVTH) is the Histidine box-1 element. A Histidine box-2 motif is present at residues 97–101 (HRIHH). The helical transmembrane segment at 160 to 180 (IALGLLLLYLGGWSFVVWGVF) threads the bilayer. The Histidine box-3 signature appears at 230-234 (HHAFQ).

Belongs to the fatty acid desaturase type 2 family. The cofactor is Fe(2+).

Its subcellular location is the membrane. The enzyme catalyses a 1-octadecanoyl 2-acyl-glycerolipid + 2 reduced [2Fe-2S]-[ferredoxin] + O2 + 2 H(+) = a 1-[(9Z)-octadecenoyl]-2-acyl-glycerolipid + 2 oxidized [2Fe-2S]-[ferredoxin] + 2 H2O. It participates in lipid metabolism; polyunsaturated fatty acid biosynthesis. Functionally, desaturase involved in fatty acid biosynthesis. Introduces a double bond at carbon 9 of stearoyl groups (18:0) attached to the sn-1 position of the glycerol moiety of membrane glycerolipids. Does not desaturate palmitic acid (16:0), palmitoleic acid (16:1) and cis-vaccenic acid (18:1). This chain is sn-1 stearoyl-lipid 9-desaturase, found in Anabaena variabilis.